The chain runs to 650 residues: Sterol O-acyltransferase 2 (650 aa).

Residues Leu41–Val79 are disordered. Positions Ala64 to Ser75 are enriched in polar residues. 5 consecutive transmembrane segments (helical) span residues Phe223–Ile243, Thr300–Thr320, Ile412–Tyr432, Ile450–Met470, and Leu493–Trp513. Residues Phe531–Asn537 carry the FYXDWWN motif motif. The next 2 membrane-spanning stretches (helical) occupy residues Ala575–Phe595 and Val630–Phe650. The active site involves His587.

This sequence belongs to the membrane-bound acyltransferase family. Sterol o-acyltransferase subfamily.

It localises to the endoplasmic reticulum membrane. Sterol O-acyltransferase that catalyzes the formation of stery esters. The polypeptide is Sterol O-acyltransferase 2 (ARE2) (Saccharomyces uvarum (strain ATCC 76518 / CBS 7001 / CLIB 283 / NBRC 10550 / MCYC 623 / NCYC 2669 / NRRL Y-11845) (Yeast)).